A 650-amino-acid polypeptide reads, in one-letter code: Acetyl-coenzyme A synthetase (650 aa).

CoA is bound by residues 189–192 (RGGK), threonine 307, and asparagine 331. ATP contacts are provided by residues 383–385 (GEP), 407–412 (DTWWQT), aspartate 496, and arginine 511. Serine 519 is a binding site for CoA. Position 522 (arginine 522) interacts with ATP. Mg(2+) contacts are provided by valine 533, histidine 535, and valine 538. Residue arginine 580 coordinates CoA. At lysine 605 the chain carries N6-acetyllysine.

The protein belongs to the ATP-dependent AMP-binding enzyme family. The cofactor is Mg(2+). In terms of processing, acetylated. Deacetylation by the SIR2-homolog deacetylase activates the enzyme.

It catalyses the reaction acetate + ATP + CoA = acetyl-CoA + AMP + diphosphate. Catalyzes the conversion of acetate into acetyl-CoA (AcCoA), an essential intermediate at the junction of anabolic and catabolic pathways. AcsA undergoes a two-step reaction. In the first half reaction, AcsA combines acetate with ATP to form acetyl-adenylate (AcAMP) intermediate. In the second half reaction, it can then transfer the acetyl group from AcAMP to the sulfhydryl group of CoA, forming the product AcCoA. This Syntrophobacter fumaroxidans (strain DSM 10017 / MPOB) protein is Acetyl-coenzyme A synthetase.